We begin with the raw amino-acid sequence, 102 residues long: NADH-quinone oxidoreductase subunit K (102 aa).

3 consecutive transmembrane segments (helical) span residues 6-26, 30-50, and 62-82; these read MEHG…GLMV, ILFI…AFVV, and VMFI…LAIL.

Belongs to the complex I subunit 4L family. NDH-1 is composed of 13 different subunits. Subunits NuoA, H, J, K, L, M, N constitute the membrane sector of the complex.

Its subcellular location is the cell inner membrane. It catalyses the reaction a quinone + NADH + 5 H(+)(in) = a quinol + NAD(+) + 4 H(+)(out). Its function is as follows. NDH-1 shuttles electrons from NADH, via FMN and iron-sulfur (Fe-S) centers, to quinones in the respiratory chain. The immediate electron acceptor for the enzyme in this species is believed to be ubiquinone. Couples the redox reaction to proton translocation (for every two electrons transferred, four hydrogen ions are translocated across the cytoplasmic membrane), and thus conserves the redox energy in a proton gradient. The protein is NADH-quinone oxidoreductase subunit K of Ectopseudomonas mendocina (strain ymp) (Pseudomonas mendocina).